A 513-amino-acid polypeptide reads, in one-letter code: Coiled-coil domain-containing protein 102B (513 aa).

The segment at 1–217 (MNLDSIHRLI…IDSLKLSEEM (217 aa)) is required for centriolar localization and for interaction with CEP250, CROCC, LRRC45 and NEK2. A phosphoserine mark is found at Ser21, Ser22, Ser34, Ser135, Ser142, Ser194, and Ser210. The stretch at 72 to 142 (ELRLRELEEV…ELSTLKKKQS (71 aa)) forms a coiled coil. Coiled-coil stretches lie at residues 268 to 337 (QKIL…ESKS) and 363 to 513 (WDKR…LQNW). A phosphoserine mark is found at Ser401, Ser404, and Ser406. Residues 493–513 (LDEEKERNENLETELRHLQNW) are disordered.

Interacts (via N-terminus) with centriolar protein CEP250/CNAP1; the interaction results in recruitment of CCDC102B to the proximal ends of centrioles. Interacts (via N-terminus) with CROCC/rootletin and LRRC45. Interacts (via N-terminus) with serine/threonine-protein kinase NEK2; the interaction results in phosphorylation of CCDC102B. Post-translationally, phosphorylated directly or indirectly by NEK2 during mitosis which causes dissociation of CCDC102B from the centrosome and allows for centrosome separation.

The protein localises to the cytoplasm. It is found in the cytoskeleton. It localises to the microtubule organizing center. Its subcellular location is the centrosome. The protein resides in the centriole. In terms of biological role, during interphase, forms fibers at the proximal ends of centrioles to maintain centrosome cohesion. During mitosis, dissociates from the centrosome following phosphorylation to allow centrosome separation. Contributes to CROCC/rootletin filament formation. This is Coiled-coil domain-containing protein 102B (CCDC102B) from Homo sapiens (Human).